Here is a 231-residue protein sequence, read N- to C-terminus: 7-cyano-7-deazaguanine synthase (231 aa).

Residue 8–18 (FSGGQDSTTCL) coordinates ATP. Zn(2+)-binding residues include cysteine 188, cysteine 197, cysteine 200, and cysteine 203.

Belongs to the QueC family. Zn(2+) is required as a cofactor.

It catalyses the reaction 7-carboxy-7-deazaguanine + NH4(+) + ATP = 7-cyano-7-deazaguanine + ADP + phosphate + H2O + H(+). Its pathway is purine metabolism; 7-cyano-7-deazaguanine biosynthesis. In terms of biological role, catalyzes the ATP-dependent conversion of 7-carboxy-7-deazaguanine (CDG) to 7-cyano-7-deazaguanine (preQ(0)). The polypeptide is 7-cyano-7-deazaguanine synthase (Salmonella arizonae (strain ATCC BAA-731 / CDC346-86 / RSK2980)).